A 464-amino-acid polypeptide reads, in one-letter code: Probable glycosyltransferase Saci_1499 (464 aa).

6 helical membrane passes run 6-26 (IFLNLLLFVYPAVFIIYQIIL), 300-320 (LIIYLLQYTPVIVTFFISTLL), 337-357 (ALLFWLVSLGLYASLLLSLAL), 373-393 (LTAFTVSISPFIVFNFFKGLL), 416-436 (IIAIIGVFGLLYLLSSILYIY), and 439-459 (YYVTGIWLLYYSSAYLYTMLL).

This sequence belongs to the glycosyltransferase 2 family.

It is found in the cell membrane. Probably part of a 4-gene DNA damage response locus in which the upstream ups system, in combination with this downstream locus, functions in homologous recombination to rescue Sulfolobales from DNA-damaging threats. This Sulfolobus acidocaldarius (strain ATCC 33909 / DSM 639 / JCM 8929 / NBRC 15157 / NCIMB 11770) protein is Probable glycosyltransferase Saci_1499.